Here is a 141-residue protein sequence, read N- to C-terminus: Putative pre-16S rRNA nuclease (141 aa).

This sequence belongs to the YqgF nuclease family.

The protein localises to the cytoplasm. In terms of biological role, could be a nuclease involved in processing of the 5'-end of pre-16S rRNA. The protein is Putative pre-16S rRNA nuclease of Shewanella denitrificans (strain OS217 / ATCC BAA-1090 / DSM 15013).